Reading from the N-terminus, the 87-residue chain is MKPNIHPEYRTVVFHDTSIDEYFRIGSTIKTDRVIELDGVTYPYVTIDVSSKSHPFYTGKLRTVASEGNVARFTQRFGRFVDAKKGG.

It belongs to the bacterial ribosomal protein bL31 family. Type B subfamily. In terms of assembly, part of the 50S ribosomal subunit.

This chain is Large ribosomal subunit protein bL31B-2/bL31B-3 (rpmE2-2), found in Escherichia coli O157:H7.